The primary structure comprises 96 residues: Fluoride-specific ion channel FluC 1 (96 aa).

Transmembrane regions (helical) follow at residues 4 to 24 (LIQG…RLAL) and 26 to 46 (LWLG…AFLM). 2 residues coordinate Na(+): glycine 61 and threonine 64. The chain crosses the membrane as a helical span at residues 69-89 (MMLNDVSFYFFTAVGCILAWL).

The protein belongs to the fluoride channel Fluc/FEX (TC 1.A.43) family.

It localises to the cell membrane. It catalyses the reaction fluoride(in) = fluoride(out). Na(+) is not transported, but it plays an essential structural role and its presence is essential for fluoride channel function. Functionally, fluoride-specific ion channel. Important for reducing fluoride concentration in the cell, thus reducing its toxicity. The chain is Fluoride-specific ion channel FluC 1 from Corynebacterium glutamicum (strain ATCC 13032 / DSM 20300 / JCM 1318 / BCRC 11384 / CCUG 27702 / LMG 3730 / NBRC 12168 / NCIMB 10025 / NRRL B-2784 / 534).